Here is a 91-residue protein sequence, read N- to C-terminus: Alpha-defensin-related sequence 12 (91 aa).

The first 19 residues, 1–19 (MKKLVLLSAFVLLAFQVQA), serve as a signal peptide directing secretion. Residues 20 to 65 (DSIQNTDEEIKTEEQPGEENQAVSISFGDPEGYALQDAAIRRARRC) constitute a propeptide that is removed on maturation. 6 tandem repeats follow at residues 65 to 67 (CPP), 68 to 70 (CPS), 71 to 73 (CLS), 74 to 76 (CPW), 77 to 79 (CPR), and 83 to 85 (CPM). The interval 65-88 (CPPCPSCLSCPWCPRCLRCPMCKC) is 6 X 3 AA tandem repeats of C-P-X.

This sequence belongs to the alpha-defensin family. Paneth cells of the small bowel.

Its subcellular location is the secreted. In terms of biological role, apparent precursor of a secreted, cationic, proline- and cysteine-rich peptide that contains Cys-Pro-Xaa repeats. Unlike cryptdin, the proposed mature peptide region lacks the structural motif characteristic of defensins. It may have microbicidal activities. In Mus musculus (Mouse), this protein is Alpha-defensin-related sequence 12 (Defa-rs12).